Reading from the N-terminus, the 316-residue chain is Probable cell division protein WhiA (316 aa).

The segment at residues 275-309 is a DNA-binding region (H-T-H motif); that stretch reads TLKELGEMVSGGKISKSGINHRLRKIDEIAEKLRA.

This sequence belongs to the WhiA family.

Involved in cell division and chromosome segregation. The chain is Probable cell division protein WhiA from Bacillus cytotoxicus (strain DSM 22905 / CIP 110041 / 391-98 / NVH 391-98).